We begin with the raw amino-acid sequence, 505 residues long: Calcium/calmodulin-dependent protein kinase kinase 1 (505 aa).

The interval 26–61 (THLEEADGGPEPTRNGVDPPPRARAASVIPGSTSRL) is disordered. Phosphoserine is present on residues Ser-67 and Ser-74. An Asymmetric dimethylarginine modification is found at Arg-78. The residue at position 100 (Ser-100) is a Phosphoserine. The residue at position 108 (Thr-108) is a Phosphothreonine. Residues 128–409 (YKLQSEIGKG…VPDIKLHPWV (282 aa)) form the Protein kinase domain. ATP is bound by residues 134–142 (IGKGAYGVV) and Lys-157. Positions 167 to 189 (QYGFPRRPPPRGSQAAQGGPAKQ) are RP domain. The active-site Proton acceptor is the Asp-275. The autoinhibitory domain stretch occupies residues 435 to 440 (KNSVRL). Residues 438 to 463 (VRLIPSWTTVILVKSMLRKRSFGNPF) form a calmodulin-binding region. Phosphoserine is present on residues Ser-458, Ser-475, and Ser-492. The disordered stretch occupies residues 460-505 (GNPFEPQARREERSMSAPGNLLVKEGFGEGGKSPELPGVQEDEAAS).

This sequence belongs to the protein kinase superfamily. Ser/Thr protein kinase family. In terms of assembly, interacts with CAMK4 and calmodulin. Post-translationally, appears to be autophosphorylated in a Ca(2+)/calmodulin-dependent manner. Phosphorylated at multiple sites by PRCAKA/PKA. Phosphorylation of Ser-458 is blocked upon binding to Ca(2+)/calmodulin. In vitro, phosphorylated by CAMK1 and CAMK4.

The protein localises to the cytoplasm. It localises to the nucleus. The enzyme catalyses L-seryl-[protein] + ATP = O-phospho-L-seryl-[protein] + ADP + H(+). It carries out the reaction L-threonyl-[protein] + ATP = O-phospho-L-threonyl-[protein] + ADP + H(+). With respect to regulation, activated by Ca(2+)/calmodulin. Binding of calmodulin may relieve intrasteric autoinhibition. Partially inhibited upon phosphorylation by PRCAKA/PKA. May be regulated through phosphorylation by CAMK1 and CAMK4. Functionally, calcium/calmodulin-dependent protein kinase that belongs to a proposed calcium-triggered signaling cascade involved in a number of cellular processes. Phosphorylates CAMK1, CAMK1D, CAMK1G and CAMK4. Involved in regulating cell apoptosis. Promotes cell survival by phosphorylating AKT1/PKB that inhibits pro-apoptotic BAD/Bcl2-antagonist of cell death. This Homo sapiens (Human) protein is Calcium/calmodulin-dependent protein kinase kinase 1 (CAMKK1).